The chain runs to 371 residues: DNA primase large subunit PriL (371 aa).

[4Fe-4S] cluster is bound by residues Cys230, Cys301, Cys310, and Cys317. Residues 337–371 are disordered; that stretch reads EREKEEGKEKGNEEKKEKREEHEKKNEKGNEIKEK.

The protein belongs to the eukaryotic-type primase large subunit family. Heterodimer of a small subunit (PriS) and a large subunit (PriL). Requires [4Fe-4S] cluster as cofactor.

Functionally, regulatory subunit of DNA primase, an RNA polymerase that catalyzes the synthesis of short RNA molecules used as primers for DNA polymerase during DNA replication. Stabilizes and modulates the activity of the small subunit, increasing the rate of DNA synthesis, and conferring RNA synthesis capability. The DNA polymerase activity may enable DNA primase to also catalyze primer extension after primer synthesis. May also play a role in DNA repair. The protein is DNA primase large subunit PriL of Methanosarcina acetivorans (strain ATCC 35395 / DSM 2834 / JCM 12185 / C2A).